Here is a 137-residue protein sequence, read N- to C-terminus: Integration host factor subunit beta (137 aa).

Basic and acidic residues predominate over residues 75-92; it reads KRVPHFKAGKELRERVDR. The disordered stretch occupies residues 75 to 137; the sequence is KRVPHFKAGK…EGGGLNLARS (63 aa). Over residues 128–137 the composition is skewed to gly residues; that stretch reads EGGGLNLARS.

It belongs to the bacterial histone-like protein family. In terms of assembly, heterodimer of an alpha and a beta chain.

In terms of biological role, this protein is one of the two subunits of integration host factor, a specific DNA-binding protein that functions in genetic recombination as well as in transcriptional and translational control. The chain is Integration host factor subunit beta from Cupriavidus pinatubonensis (strain JMP 134 / LMG 1197) (Cupriavidus necator (strain JMP 134)).